Consider the following 365-residue polypeptide: tRNA/tmRNA (uracil-C(5))-methyltransferase (365 aa).

S-adenosyl-L-methionine-binding residues include glutamine 189, tyrosine 217, asparagine 222, glutamate 238, and aspartate 298. The Nucleophile role is filled by cysteine 323. Glutamate 357 serves as the catalytic Proton acceptor.

It belongs to the class I-like SAM-binding methyltransferase superfamily. RNA M5U methyltransferase family. TrmA subfamily.

The catalysed reaction is uridine(54) in tRNA + S-adenosyl-L-methionine = 5-methyluridine(54) in tRNA + S-adenosyl-L-homocysteine + H(+). It catalyses the reaction uridine(341) in tmRNA + S-adenosyl-L-methionine = 5-methyluridine(341) in tmRNA + S-adenosyl-L-homocysteine + H(+). Dual-specificity methyltransferase that catalyzes the formation of 5-methyluridine at position 54 (m5U54) in all tRNAs, and that of position 341 (m5U341) in tmRNA (transfer-mRNA). The sequence is that of tRNA/tmRNA (uracil-C(5))-methyltransferase from Shewanella pealeana (strain ATCC 700345 / ANG-SQ1).